A 234-amino-acid chain; its full sequence is Alpha N-terminal protein methyltransferase 1 (234 aa).

Residues G71, R76, 93-95 (DVV), 120-121 (LQ), and Q136 each bind S-adenosyl-L-methionine.

Belongs to the methyltransferase superfamily. NTM1 family. As to expression, expressed in uterine cells and PVT neurons of the tail. Expressed in pharynx, intestine and DVB tail neuron.

It carries out the reaction N-terminal L-alanyl-L-prolyl-L-lysyl-[protein] + 3 S-adenosyl-L-methionine = N-terminal N,N,N-trimethyl-L-alanyl-L-prolyl-L-lysyl-[protein] + 3 S-adenosyl-L-homocysteine + 3 H(+). The enzyme catalyses N-terminal L-seryl-L-prolyl-L-lysyl-[protein] + 3 S-adenosyl-L-methionine = N-terminal N,N,N-trimethyl-L-seryl-L-prolyl-L-lysyl-[protein] + 3 S-adenosyl-L-homocysteine + 3 H(+). The catalysed reaction is N-terminal L-prolyl-L-prolyl-L-lysyl-[protein] + 2 S-adenosyl-L-methionine = N-terminal N,N-dimethyl-L-prolyl-L-prolyl-L-lysyl-[protein] + 2 S-adenosyl-L-homocysteine + 2 H(+). Its function is as follows. Alpha-N-methyltransferase that methylates the N-terminus of target proteins containing the N-terminal motif [Ala/Pro/Ser]-Pro-Lys when the initiator Met is cleaved. Specifically catalyzes mono-, di- or tri-methylation of exposed alpha-amino group of Ala or Ser residue in the [Ala/Ser]-Pro-Lys motif and mono- or di-methylation of Pro in the Pro-Pro-Lys motif. Probably required for the synthesis of neurotransmitter melatonin from serotonin, which plays a role in promoting a sleep-like state, called lethargus, during larval development. In Caenorhabditis elegans, this protein is Alpha N-terminal protein methyltransferase 1.